A 210-amino-acid polypeptide reads, in one-letter code: Putative protein-lysine deacylase ABHD14B (210 aa).

A2 carries the post-translational modification N-acetylalanine. S91 carries the phosphoserine modification. Catalysis depends on charge relay system residues S111, D162, and H188.

It belongs to the AB hydrolase superfamily. ABHD14 family. As to quaternary structure, may interact with TAF1.

The protein localises to the cytoplasm. It is found in the nucleus. The enzyme catalyses L-lysyl-[protein] + acetyl-CoA = N(6)-acetyl-L-lysyl-[protein] + CoA + H(+). In terms of biological role, acts as an atypical protein-lysine deacetylase in vitro. Catalyzes the deacetylation of lysine residues using CoA as substrate, generating acetyl-CoA and the free amine of protein-lysine residues. Additional experiments are however required to confirm the protein-lysine deacetylase activity in vivo. Has hydrolase activity towards various surrogate p-nitrophenyl (pNp) substrates, such as pNp-butyrate, pNp-acetate and pNp-octanoate in vitro, with a strong preference for pNp-acetate. May activate transcription. The sequence is that of Putative protein-lysine deacylase ABHD14B from Pongo abelii (Sumatran orangutan).